The chain runs to 179 residues: Large ribosomal subunit protein uL5 (179 aa).

It belongs to the universal ribosomal protein uL5 family. In terms of assembly, part of the 50S ribosomal subunit; part of the 5S rRNA/L5/L18/L25 subcomplex. Contacts the 5S rRNA and the P site tRNA. Forms a bridge to the 30S subunit in the 70S ribosome.

Its function is as follows. This is one of the proteins that bind and probably mediate the attachment of the 5S RNA into the large ribosomal subunit, where it forms part of the central protuberance. In the 70S ribosome it contacts protein S13 of the 30S subunit (bridge B1b), connecting the 2 subunits; this bridge is implicated in subunit movement. Contacts the P site tRNA; the 5S rRNA and some of its associated proteins might help stabilize positioning of ribosome-bound tRNAs. This Rickettsia rickettsii (strain Iowa) protein is Large ribosomal subunit protein uL5.